Consider the following 518-residue polypeptide: MAASMARLWWPFLARQGLRSRGRCVCSQNPRRSFATEKRVRNLLYEHAREGYSELPYLDMESVCACPEKAARSLELRKGELRPADLPAIISTWQELRQLREQIRSLEAEKEAVAEAVRALLANQDSDQVQKDPQYQGLRARGREIRKQLTPLYPQETQLEEQLYQQALRLPNQTHPDTPVGDESQARVVRVVGEKPAFSFQPRGHLEIGEKLDIIRQKRLSHVSGHRSYYLRGAGALLQHGLVNFTLSKLVSRGFTPMTVPDLLRGAVFEGCGMTPNANPSQIYNIDPSRFEDLNLAGTAEVGLAGYFMDHSVAFRDLPVRMVCASTCYRAETDTGKEPWGLYRVHHFTKVEMFGVTGPGLEQSSQLLDEFLSLQVEILTELGLHFRVLDMPTQELGLPAYRKFDIEAWMPGRGRYGEVTSASNCTDFQSRRLYIMFETETGELQFAHTVNATACAVPRVLIALLESNQQKDGSVLVPAALQPYLGTDRITAPTHVPLQYIGPNQPQKPRLPGQSATR.

A mitochondrion-targeting transit peptide spans 1 to 34 (MAASMARLWWPFLARQGLRSRGRCVCSQNPRRSF). Lysine 110 carries the post-translational modification N6-acetyllysine. Lysine 195 is modified (N6-succinyllysine). 299 to 301 (TAE) contributes to the L-serine binding site. 330-332 (RAE) contacts ATP. N6-succinyllysine is present on lysine 337. Residue valine 345 participates in ATP binding. Residue glutamate 352 coordinates L-serine. ATP is bound at residue 418 to 421 (EVTS). Residue threonine 453 coordinates L-serine. A disordered region spans residues 497-518 (PLQYIGPNQPQKPRLPGQSATR).

It belongs to the class-II aminoacyl-tRNA synthetase family. Type-1 seryl-tRNA synthetase subfamily. In terms of assembly, homodimer. The tRNA molecule probably binds across the dimer. Ubiquitous.

The protein resides in the mitochondrion matrix. It carries out the reaction tRNA(Ser) + L-serine + ATP = L-seryl-tRNA(Ser) + AMP + diphosphate + H(+). It catalyses the reaction tRNA(Sec) + L-serine + ATP = L-seryl-tRNA(Sec) + AMP + diphosphate + H(+). It participates in aminoacyl-tRNA biosynthesis; selenocysteinyl-tRNA(Sec) biosynthesis; L-seryl-tRNA(Sec) from L-serine and tRNA(Sec): step 1/1. Functionally, catalyzes the attachment of serine to tRNA(Ser). Is also probably able to aminoacylate tRNA(Sec) with serine, to form the misacylated tRNA L-seryl-tRNA(Sec), which will be further converted into selenocysteinyl-tRNA(Sec). The chain is Serine--tRNA ligase, mitochondrial (Sars2) from Mus musculus (Mouse).